The following is a 525-amino-acid chain: 2-isopropylmalate synthase (525 aa).

In terms of domain architecture, Pyruvate carboxyltransferase spans 12–274 (VVIFDTTLRD…WNKIDTTQLT (263 aa)). 4 residues coordinate Mn(2+): D21, H209, H211, and N245. Residues 398–525 (KLLSLSVIAG…GHGASAAAAS (128 aa)) form a regulatory domain region.

Belongs to the alpha-IPM synthase/homocitrate synthase family. LeuA type 1 subfamily. Homodimer. The cofactor is Mn(2+).

It is found in the cytoplasm. It catalyses the reaction 3-methyl-2-oxobutanoate + acetyl-CoA + H2O = (2S)-2-isopropylmalate + CoA + H(+). It participates in amino-acid biosynthesis; L-leucine biosynthesis; L-leucine from 3-methyl-2-oxobutanoate: step 1/4. Catalyzes the condensation of the acetyl group of acetyl-CoA with 3-methyl-2-oxobutanoate (2-ketoisovalerate) to form 3-carboxy-3-hydroxy-4-methylpentanoate (2-isopropylmalate). This chain is 2-isopropylmalate synthase, found in Bradyrhizobium sp. (strain ORS 278).